A 238-amino-acid polypeptide reads, in one-letter code: End-binding protein 1 (238 aa).

The Calponin-homology (CH) domain occupies 15 to 117; it reads FVGRVSLLKW…FFQWFKWFFD (103 aa). The interval 101 to 238 is interaction with aurora kinase; it reads KYMDNFEFFQ…EDILYAEYHQ (138 aa). Over residues 124–165 the composition is skewed to polar residues; that stretch reads KSGATESGSANAVTKTSKPGNRSGSTAASMQNPKASSTSGPS. The interval 124–169 is disordered; sequence KSGATESGSANAVTKTSKPGNRSGSTAASMQNPKASSTSGPSIDSK. S148 carries the post-translational modification Phosphoserine. Residues 156–238 form the EB1 C-terminal domain; the sequence is PKASSTSGPS…EDILYAEYHQ (83 aa).

Belongs to the MAPRE family. As to quaternary structure, homodimer; disulfide-linked and via interaction of the C-terminal EB1-specific domains. Interacts with BOP1 (via C-terminal WD repeats). Interacts with giardin subunit gamma, neurogenic locus notch homolog protein, GL50803_8358 and GL50803_11327. Interacts (via C-terminal residues 101-238) with aurora kinase. Interacts with tubulin gamma chain. In terms of processing, phosphorylated in vitro by aurora kinase. Phosphorylation is important for cell division.

It localises to the nucleus membrane. The protein resides in the cytoplasm. It is found in the cytoskeleton. The protein localises to the spindle. Its subcellular location is the nucleus envelope. It localises to the flagellum axoneme. The protein resides in the cell projection. It is found in the cilium. The protein localises to the flagellum. In terms of biological role, involved in cell division. Involved in mitosis. Regulates dynamics of microtubules (MTs) during mitosis. Required for cytokinesis. Binds polymerized MTs in vitro. Is able to rescue a mitotic division defect, the proper positioning of the nucleus, of the S.cerevisiae BIM1 knockout mutant in a complementation assay. May play a role in spindle positioning and MT distribution. May be involved in MT nucleation for the formation of median bodies and in the biogenesis of flagella. Based on its localization to both the flagellar exit point and the distal flagellar tips, it may mediate the transition from anterograde to retrograde intraflagellar transport (IFT). The protein is End-binding protein 1 of Giardia intestinalis (strain ATCC 50803 / WB clone C6) (Giardia lamblia).